We begin with the raw amino-acid sequence, 151 residues long: Metallothiol transferase FosB (151 aa).

A VOC domain is found at 4 to 119 (SINHVTYSVS…DGHKFELHTG (116 aa)). The Mg(2+) site is built by histidine 7, histidine 66, and glutamate 115. Glutamate 115 acts as the Proton donor/acceptor in catalysis.

It belongs to the fosfomycin resistance protein family. FosB subfamily. In terms of assembly, homodimer. Mg(2+) is required as a cofactor.

The protein localises to the cytoplasm. Metallothiol transferase which confers resistance to fosfomycin by catalyzing the addition of a thiol cofactor to fosfomycin. L-cysteine is probably the physiological thiol donor. This is Metallothiol transferase FosB from Staphylococcus saprophyticus subsp. saprophyticus (strain ATCC 15305 / DSM 20229 / NCIMB 8711 / NCTC 7292 / S-41).